The primary structure comprises 164 residues: Biotin carboxyl carrier protein of acetyl-CoA carboxylase (164 aa).

In terms of domain architecture, Biotinyl-binding spans Gly-86 to Val-162. An N6-biotinyllysine modification is found at Lys-128.

In terms of assembly, homodimer.

It functions in the pathway lipid metabolism; fatty acid biosynthesis. In terms of biological role, this protein is a component of the acetyl coenzyme A carboxylase complex; first, biotin carboxylase catalyzes the carboxylation of the carrier protein and then the transcarboxylase transfers the carboxyl group to form malonyl-CoA. In Chlamydia trachomatis serovar D (strain ATCC VR-885 / DSM 19411 / UW-3/Cx), this protein is Biotin carboxyl carrier protein of acetyl-CoA carboxylase (accB).